Consider the following 223-residue polypeptide: Ribose-5-phosphate isomerase A (223 aa).

Residues 32–35, 85–88, and 98–101 contribute to the substrate site; these read TGST, DGAD, and KGGG. The Proton acceptor role is filled by glutamate 107. Substrate is bound at residue lysine 125.

This sequence belongs to the ribose 5-phosphate isomerase family. Homodimer.

The enzyme catalyses aldehydo-D-ribose 5-phosphate = D-ribulose 5-phosphate. The protein operates within carbohydrate degradation; pentose phosphate pathway; D-ribose 5-phosphate from D-ribulose 5-phosphate (non-oxidative stage): step 1/1. In terms of biological role, catalyzes the reversible conversion of ribose-5-phosphate to ribulose 5-phosphate. The chain is Ribose-5-phosphate isomerase A from Pseudomonas syringae pv. syringae (strain B728a).